The primary structure comprises 662 residues: UvrABC system protein B (662 aa).

In terms of domain architecture, Helicase ATP-binding spans Glu25–Arg412. Gly38–Thr45 lines the ATP pocket. Residues Tyr91–Ile114 carry the Beta-hairpin motif. One can recognise a Helicase C-terminal domain in the interval Gln429 to Ile595. A UVR domain is found at Lys620–Gln655.

It belongs to the UvrB family. Forms a heterotetramer with UvrA during the search for lesions. Interacts with UvrC in an incision complex.

It localises to the cytoplasm. The UvrABC repair system catalyzes the recognition and processing of DNA lesions. A damage recognition complex composed of 2 UvrA and 2 UvrB subunits scans DNA for abnormalities. Upon binding of the UvrA(2)B(2) complex to a putative damaged site, the DNA wraps around one UvrB monomer. DNA wrap is dependent on ATP binding by UvrB and probably causes local melting of the DNA helix, facilitating insertion of UvrB beta-hairpin between the DNA strands. Then UvrB probes one DNA strand for the presence of a lesion. If a lesion is found the UvrA subunits dissociate and the UvrB-DNA preincision complex is formed. This complex is subsequently bound by UvrC and the second UvrB is released. If no lesion is found, the DNA wraps around the other UvrB subunit that will check the other stand for damage. The protein is UvrABC system protein B of Caldanaerobacter subterraneus subsp. tengcongensis (strain DSM 15242 / JCM 11007 / NBRC 100824 / MB4) (Thermoanaerobacter tengcongensis).